The sequence spans 347 residues: GMP reductase (347 aa).

Residue 108–131 (ADFQKTKDIMALTDDLIFICIDIA) coordinates NADP(+). Residues G181 and G183 each coordinate K(+). C186 functions as the Thioimidate intermediate in the catalytic mechanism. An NADP(+)-binding site is contributed by 216-239 (IIGDGGCSCAGDVSKAFGGGADFV).

The protein belongs to the IMPDH/GMPR family. GuaC type 1 subfamily. As to quaternary structure, homotetramer.

The enzyme catalyses IMP + NH4(+) + NADP(+) = GMP + NADPH + 2 H(+). In terms of biological role, catalyzes the irreversible NADPH-dependent deamination of GMP to IMP. It functions in the conversion of nucleobase, nucleoside and nucleotide derivatives of G to A nucleotides, and in maintaining the intracellular balance of A and G nucleotides. This chain is GMP reductase, found in Aliivibrio fischeri (strain MJ11) (Vibrio fischeri).